A 671-amino-acid chain; its full sequence is Preterminal protein (671 aa).

Positions 380–389 match the Nuclear localization signal motif; that stretch reads RLPVRRRRRR. The tract at residues 386–411 is disordered; it reads RRRRVPPPPPPPEEEEGEALMEEEIE. Over residues 397 to 411 the composition is skewed to acidic residues; that stretch reads PEEEEGEALMEEEIE. Residue Ser580 is modified to O-(5'-phospho-DNA)-serine. Positions 645-671 are disordered; that stretch reads GADVPLPPLPAGPEPPLPPGARPRHRF. Over residues 649–665 the composition is skewed to pro residues; the sequence is PLPPLPAGPEPPLPPGA.

The protein belongs to the adenoviridae terminal protein family. As to quaternary structure, heterodimer with the polymerase; this heterodimer binds to bp 9 to 18 of the genome. Interacts with host POU2F1; POU2F1 binds to the auxiliary sequences in the inverted terminal repeats and tethers the pTP-POL heterodimer to the origin DNA thereby participating in the assembly of the pre-initiation complex (POL-TP-DBP-NFIA-POU2F1). Post-translationally, preterminal protein is used to replicate viral genome, upon genomic encapsidation it is processed first into iTP and finally into TP by adenovirus protease.

It localises to the host nucleus matrix. In terms of biological role, protein covalently bound to the viral DNA that acts as a primer for viral genomic replication by DNA strand displacement. Assembles on the viral origin of replication in an initiation complex with viral polymerase, DBP, host NFIA and host POU2F1/OCT1. During initiation, the polymerase covalently couples the first dCTP with Ser-580 of pTP. The terminal protein stimulates the template activity over 20 fold compared to protein-free templates. Neo-synthesized viral genomes are linked to two preterminal proteins, one for each 5' end. These new genomes are encapsidated in the nucleus, and during capsid maturation by viral protease, preterminal protein is first cleaved into intermediary (iTP), then into mature TP. May play a role in host nuclear matrix localization of genomic DNA. This is Preterminal protein from Human adenovirus C serotype 5 (HAdV-5).